The primary structure comprises 268 residues: Tryptophan synthase alpha chain (268 aa).

Catalysis depends on proton acceptor residues glutamate 49 and aspartate 60.

Belongs to the TrpA family. Tetramer of two alpha and two beta chains.

The enzyme catalyses (1S,2R)-1-C-(indol-3-yl)glycerol 3-phosphate + L-serine = D-glyceraldehyde 3-phosphate + L-tryptophan + H2O. It functions in the pathway amino-acid biosynthesis; L-tryptophan biosynthesis; L-tryptophan from chorismate: step 5/5. Functionally, the alpha subunit is responsible for the aldol cleavage of indoleglycerol phosphate to indole and glyceraldehyde 3-phosphate. The protein is Tryptophan synthase alpha chain of Shigella boydii serotype 4 (strain Sb227).